We begin with the raw amino-acid sequence, 485 residues long: Glycogen synthase (485 aa).

Lysine 15 is an ADP-alpha-D-glucose binding site.

The protein belongs to the glycosyltransferase 1 family. Bacterial/plant glycogen synthase subfamily.

It carries out the reaction [(1-&gt;4)-alpha-D-glucosyl](n) + ADP-alpha-D-glucose = [(1-&gt;4)-alpha-D-glucosyl](n+1) + ADP + H(+). The protein operates within glycan biosynthesis; glycogen biosynthesis. Functionally, synthesizes alpha-1,4-glucan chains using ADP-glucose. This chain is Glycogen synthase, found in Fervidobacterium nodosum (strain ATCC 35602 / DSM 5306 / Rt17-B1).